The primary structure comprises 295 residues: Acetylglutamate kinase (295 aa).

Substrate is bound by residues 64–65 (GG), R86, and N190.

This sequence belongs to the acetylglutamate kinase family. ArgB subfamily.

Its subcellular location is the cytoplasm. It carries out the reaction N-acetyl-L-glutamate + ATP = N-acetyl-L-glutamyl 5-phosphate + ADP. It functions in the pathway amino-acid biosynthesis; L-arginine biosynthesis; N(2)-acetyl-L-ornithine from L-glutamate: step 2/4. In terms of biological role, catalyzes the ATP-dependent phosphorylation of N-acetyl-L-glutamate. The protein is Acetylglutamate kinase of Heliobacterium modesticaldum (strain ATCC 51547 / Ice1).